A 147-amino-acid chain; its full sequence is Protein phosphatase 1 regulatory subunit 14A (147 aa).

Residues 1-11 (MAAQRLGKRVL) are compositionally biased toward basic residues. The interval 1 to 37 (MAAQRLGKRVLSKLQSPSRARGPGGSPGGLQKRHARV) is disordered. Residue serine 26 is modified to Phosphoserine. Residues 35–120 (ARVTVKYDRR…LLVKLRGLHK (86 aa)) are inhibitory. Threonine 38 is modified (phosphothreonine). The tract at residues 118–147 (LHKQPGLRQPSPSGDGSLSPRQDRARTAPP) is disordered. Positions 127–137 (PSPSGDGSLSP) are enriched in polar residues. Serine 128, serine 134, and serine 136 each carry phosphoserine. A compositionally biased stretch (basic and acidic residues) spans 138–147 (RQDRARTAPP).

It belongs to the PP1 inhibitor family. Phosphorylation of Thr-38 induces a conformation change. In terms of tissue distribution, detected in aorta smooth muscle and bladder.

It localises to the cytoplasm. Its function is as follows. Inhibitor of PPP1CA. Has over 1000-fold higher inhibitory activity when phosphorylated, creating a molecular switch for regulating the phosphorylation status of PPP1CA substrates and smooth muscle contraction. In Sus scrofa (Pig), this protein is Protein phosphatase 1 regulatory subunit 14A (CPI17).